The sequence spans 472 residues: 4-O-methyl-glucuronoyl methylesterase 1 (472 aa).

An N-terminal signal peptide occupies residues 1-20 (MKSAAYLAALAAVLPAYVNA). Residues 21-56 (QAQEWGQCGGIGWTGATTCVSGTVCTVLNPYYSQCL) enclose the CBM1 domain. The segment at 62–97 (TAPPPPPPPPTSVSSSSSSSTSSAPPSGPSGTSPTC) is disordered. The segment covering 63–72 (APPPPPPPPT) has biased composition (pro residues). Residues 73–96 (SVSSSSSSSTSSAPPSGPSGTSPT) show a composition bias toward low complexity. 3 disulfide bridges follow: Cys97/Cys131, Cys283/Cys419, and Cys315/Cys391. A GXSYXG catalytic site motif motif is present at residues 282-287 (GCSRDG). Residue Ser284 is the Nucleophile of the active site. Positions 288, 330, 338, and 382 each coordinate substrate. His418 serves as the catalytic Proton donor/acceptor. N-linked (GlcNAc...) asparagine glycosylation occurs at Asn465.

It belongs to the carbohydrate esterase 15 (CE15) family.

The protein localises to the secreted. The catalysed reaction is a 4-O-methyl-alpha-D-glucuronosyl ester derivative + H2O = 4-O-methyl-alpha-D-glucuronate derivative + an alcohol + H(+). Its function is as follows. Glucuronoyl esterase which may play a significant role in biomass degradation, as it is considered to disconnect hemicellulose from lignin through the hydrolysis of the ester bond between 4-O-methyl-D-glucuronic acid residues of glucuronoxylans and aromatic alcohols of lignin. Can hydrolyze benzyl glucuronic acid (BnGlcA), allyl glucuronic acid (allylGlcA) and to a lower degree methyl glucuronic acid (MeGlcA) in vitro. The protein is 4-O-methyl-glucuronoyl methylesterase 1 of Phanerochaete chrysosporium (strain RP-78 / ATCC MYA-4764 / FGSC 9002) (White-rot fungus).